Consider the following 1019-residue polypeptide: Insulin-degrading enzyme (1019 aa).

His-108 contacts Zn(2+). Catalysis depends on Glu-111, which acts as the Proton acceptor. Zn(2+) is bound by residues His-112 and Glu-189. At Lys-192 the chain carries N6-succinyllysine. Substrate-binding positions include 336 to 342 (HLIGHEG) and 359 to 363 (LVGGQ). Arg-429 is a binding site for ATP. Lys-697 bears the N6-succinyllysine mark. A SlyX motif motif is present at residues 853–858 (EKPPHY). 895 to 901 (DKPKKLS) serves as a coordination point for ATP.

The protein belongs to the peptidase M16 family. Homodimer. Can also form homotetramers. In terms of assembly, (Microbial infection) Interacts (via N-terminus) with varicella-zoster virus (VZV) envelope glycoprotein E (via N-terminus); the membrane-associated isoform may function as an entry receptor for this virus. Requires Zn(2+) as cofactor. Post-translationally, the N-terminus is blocked. In terms of tissue distribution, detected in brain and in cerebrospinal fluid (at protein level).

Its subcellular location is the cytoplasm. It localises to the cytosol. The protein localises to the cell membrane. It is found in the secreted. The enzyme catalyses Degradation of insulin, glucagon and other polypeptides. No action on proteins.. Activated by small peptides. Activated by ATP and GTP, and to a lesser extent by CTP, TTP and PPPi. Inhibited by bacitracin. In vitro modification of Cys residues impairs enzyme activity. Functionally, plays a role in the cellular breakdown of insulin, APP peptides, IAPP peptides, natriuretic peptides, glucagon, bradykinin, kallidin, and other peptides, and thereby plays a role in intercellular peptide signaling. Substrate binding induces important conformation changes, making it possible to bind and degrade larger substrates, such as insulin. Contributes to the regulation of peptide hormone signaling cascades and regulation of blood glucose homeostasis via its role in the degradation of insulin, glucagon and IAPP. Plays a role in the degradation and clearance of APP-derived amyloidogenic peptides that are secreted by neurons and microglia. Degrades the natriuretic peptides ANP, BNP and CNP, inactivating their ability to raise intracellular cGMP. Also degrades an aberrant frameshifted 40-residue form of NPPA (fsNPPA) which is associated with familial atrial fibrillation in heterozygous patients. Involved in antigen processing. Produces both the N terminus and the C terminus of MAGEA3-derived antigenic peptide (EVDPIGHLY) that is presented to cytotoxic T lymphocytes by MHC class I. In terms of biological role, (Microbial infection) The membrane-associated isoform acts as an entry receptor for varicella-zoster virus (VZV). In Homo sapiens (Human), this protein is Insulin-degrading enzyme.